Here is a 200-residue protein sequence, read N- to C-terminus: Exopolysaccharide production protein PSS (200 aa).

This sequence belongs to the bacterial sugar transferase family.

The chain is Exopolysaccharide production protein PSS (pss) from Rhizobium leguminosarum bv. phaseoli.